The chain runs to 599 residues: MNKRGYECSQEDTDKLPESKRQKVPALASVIVEAVKVDSLQRLCSSLEPLFRRIVSEEVERALSRLGNAKLTSRSPEPKRIQDRNGRNLQLHFRTRMPPHLFTGGKVEGERGSAIHVVLIDANTGNVVQTGEESASKLNVVVLEGDFNDEDDEDWTREHFESFEVKEREGKRPILTGDTQIVLKEGVGTLGELTFTDNSSWIRSRKFRLGVKPASGYGDSFCIREAKTEPFAVKDHRGELYKKHYPPAVHDEVWRLDRIAKDGVLHKKLLKANIVTVEDFLRLLVKDPQKLRNLLGSGMSNRMWENTVEHAKTCVLGGKLYVFYTDQTHATGVVFNHIYEFRGLITNGQFLSLESLNHDQKISADILVKLAYENWHKAIEYDGKLLNCLPVAEKEIKSLLEPKMVSAQTAPNHQQLHNQNNRQTVQGHQNAITYSPVPQPIDYPQFAQQHCNQLLPSFPCNVQDYNRSMESSNDSSSYNGEDWCPPRAAGQGLEDIFSEEIRLRSSEMLETDDMQRLLKTFGIGVNTVGTQGGFGQTDESCYGYSIPYQAQIDNTYRRERNRGSGKAVVGWLKLKAALRWGIFIRKKAAERRPQIVEID.

The disordered stretch occupies residues M1 to R21. The tract at residues M1 to R80 is calmodulin-binding. The tract at residues E150–N273 is DNA-binding.

This sequence belongs to the plant ACBP60 protein family. As to quaternary structure, interacts with calmodulin (CaM).

Its subcellular location is the nucleus. Its function is as follows. Transcription activator that binds DNA in a sequence-specific manner, likely 5'-GAAATTTTGG-3', to promote the expression of target genes. In Arabidopsis thaliana (Mouse-ear cress), this protein is Calmodulin-binding protein 60 E.